The chain runs to 229 residues: Putative N-acetylmannosamine-6-phosphate 2-epimerase 2 (229 aa).

Belongs to the NanE family.

It catalyses the reaction an N-acyl-D-glucosamine 6-phosphate = an N-acyl-D-mannosamine 6-phosphate. The protein operates within amino-sugar metabolism; N-acetylneuraminate degradation; D-fructose 6-phosphate from N-acetylneuraminate: step 3/5. Converts N-acetylmannosamine-6-phosphate (ManNAc-6-P) to N-acetylglucosamine-6-phosphate (GlcNAc-6-P). In Salmonella paratyphi A (strain ATCC 9150 / SARB42), this protein is Putative N-acetylmannosamine-6-phosphate 2-epimerase 2.